A 349-amino-acid chain; its full sequence is Phosphoribosylformylglycinamidine cyclo-ligase (349 aa).

The protein belongs to the AIR synthase family.

It localises to the cytoplasm. The enzyme catalyses 2-formamido-N(1)-(5-O-phospho-beta-D-ribosyl)acetamidine + ATP = 5-amino-1-(5-phospho-beta-D-ribosyl)imidazole + ADP + phosphate + H(+). Its pathway is purine metabolism; IMP biosynthesis via de novo pathway; 5-amino-1-(5-phospho-D-ribosyl)imidazole from N(2)-formyl-N(1)-(5-phospho-D-ribosyl)glycinamide: step 2/2. The sequence is that of Phosphoribosylformylglycinamidine cyclo-ligase from Methanococcus vannielii (strain ATCC 35089 / DSM 1224 / JCM 13029 / OCM 148 / SB).